We begin with the raw amino-acid sequence, 133 residues long: Small ribosomal subunit protein uS11 (133 aa).

This sequence belongs to the universal ribosomal protein uS11 family. Part of the 30S ribosomal subunit.

Functionally, located on the platform of the 30S subunit. The polypeptide is Small ribosomal subunit protein uS11 (Aeropyrum pernix (strain ATCC 700893 / DSM 11879 / JCM 9820 / NBRC 100138 / K1)).